The following is a 145-amino-acid chain: Synaptojanin-2-binding protein (145 aa).

Residues Met1–Gly117 are Cytoplasmic-facing. One can recognise a PDZ domain in the interval Glu13–Leu100. A helical membrane pass occupies residues Val118–Phe138. Over Val139–Leu145 the chain is Mitochondrial intermembrane.

Binds (via the PDZ domain) to isoform 2A of SYNJ2 (via the unique motif in the C-terminus). Interacts (via C-terminus) with RALBP1. Interacts (via PDZ domain) with ACVR2A (via C-terminus) and ACVR2B (via C-terminus). Forms a ternary complex with ACVR2A and RALBP1. Interacts with MAPK12. Interacts with DLL1; enhances DLL1 protein stability, and promotes notch signaling in endothelial cells. In terms of tissue distribution, widely expressed.

It is found in the mitochondrion outer membrane. Regulates endocytosis of activin type 2 receptor kinases through the Ral/RALBP1-dependent pathway and may be involved in suppression of activin-induced signal transduction. The chain is Synaptojanin-2-binding protein (Synj2bp) from Rattus norvegicus (Rat).